The chain runs to 124 residues: MSTTNDNTTMQRLMITDMRPLSMDSIITSLTKEIITHKFIYLINNECIVRKLDERQATFTFLVNYEMKLLHKVGSTKYKKYTEYNTKYGTFPMPIFINHGGFLECIGIKPTKHTPIIYKYDLNP.

Positions 121–124 (DLNP) match the DLNP; interaction with MAP1B motif.

This sequence belongs to the pneumovirus non-structural protein 2 family. In terms of assembly, monomer (instable). Homomultimer. Heteromultimer with NS1. Interacts with host RIGI (via N-terminus); this interaction prevents host signaling pathway involved in interferon production. Interacts with host MAP1B/microtubule-associated protein 1B.

It is found in the host mitochondrion. Plays a major role in antagonizing the type I IFN-mediated antiviral response. Acts cooperatively with NS1 to repress activation and nuclear translocation of host IFN-regulatory factor IRF3. Interacts with the host cytoplasmic sensor of viral nucleic acids RIGI and prevents the interaction with its downstream partner MAVS. Together with NS2, participates in the proteasomal degradation of host STAT2, IRF3, IRF7, TBK1 and RIGI through a NS-degradasome involving CUL2 and Elongin-C. The degradasome requires an intact mitochondrial MAVS. Induces host SOCS1 expression. Induces activation of NF-kappa-B. Suppresses premature apoptosis by an NF-kappa-B-dependent, interferon-independent mechanism promoting continued viral replication. This Human respiratory syncytial virus B (strain B1) protein is Non-structural protein 2 (1B).